Consider the following 482-residue polypeptide: E1B 55 kDa protein (482 aa).

A disordered region spans residues 73–94 (VLDSGEGPSCADDRDKQEKKES). A compositionally biased stretch (basic and acidic residues) spans 83–94 (ADDRDKQEKKES). 2 positions are modified to phosphoserine: S476 and S477.

The protein belongs to the adenoviridae E1B 55 kDa protein family. Interacts with host PML-4 and PML-5; this interaction promotes efficient subnuclear targeting of E1B-55K to PML nuclear bodies. Interacts with E4-ORF3 protein. Interacts with E4-ORF6 protein.

Its subcellular location is the host nucleus. It localises to the host cytoplasm. Functionally, plays a major role to prevent cellular inhibition of viral genome replication. Assembles an SCF-like E3 ubiquitin ligase complex based on the cellular proteins ELOB, ELOC, CUL5 and RBX1, in cooperation with viral E4orf6. This viral RING-type ligase ubiquitinates cellular substrates and targets them to proteasomal degradation: TP53/p53, LIG4, MRE11-RAD50-NBS1 (MRN) complex, ITGA3, DAXX and BLM. E1B-55K probably acts as the substrate-specific adapter of the SCF-like E3 ubiquitin ligase complex. Degradation of host TP53/p53 activity is essential for preventing E1A-induced TP53 accumulation that would otherwise lead to cell apoptosis and growth arrest. E1B-55K also inactivates TP53 transcription-factor activity by binding its transactivation domain. E1B-55K also functions as a SUMO1 E3 ligase for TP53 which causes the latter to be sequestered in promyelocytic leukemia (PML) nuclear bodies thereby contributing to maximal inhibition of TP53 function. The chain is E1B 55 kDa protein from Homo sapiens (Human).